Reading from the N-terminus, the 318-residue chain is tRNA pseudouridine synthase B (318 aa).

The active-site Nucleophile is the Asp-54.

This sequence belongs to the pseudouridine synthase TruB family. Type 1 subfamily.

It carries out the reaction uridine(55) in tRNA = pseudouridine(55) in tRNA. Its function is as follows. Responsible for synthesis of pseudouridine from uracil-55 in the psi GC loop of transfer RNAs. The protein is tRNA pseudouridine synthase B of Ralstonia pickettii (strain 12J).